The primary structure comprises 105 residues: Met repressor (105 aa).

It belongs to the MetJ family. In terms of assembly, homodimer.

Its subcellular location is the cytoplasm. Functionally, this regulatory protein, when combined with SAM (S-adenosylmethionine) represses the expression of the methionine regulon and of enzymes involved in SAM synthesis. The protein is Met repressor of Yersinia enterocolitica serotype O:8 / biotype 1B (strain NCTC 13174 / 8081).